An 843-amino-acid polypeptide reads, in one-letter code: Protein kintoun (843 aa).

Disordered regions lie at residues 212–242, 371–417, 545–672, and 761–843; these read PTAE…VHPM, FSRE…PVHS, YTVK…GASQ, and KKNQ…DDVM. The residue at position 376 (Ser-376) is a Phosphoserine. A compositionally biased stretch (acidic residues) spans 387 to 397; the sequence is PVEEEEADADL. Positions 564–573 are enriched in basic and acidic residues; the sequence is VKFDHNKESL. The span at 584 to 593 shows a compositional bias: acidic residues; that stretch reads TEEDEVEEQH. The span at 605–619 shows a compositional bias: basic residues; it reads QNKKPSKKQRKRNKK. Positions 658 to 671 are enriched in polar residues; sequence YSECNDSSVGSGAS. A compositionally biased stretch (basic residues) spans 761-775; it reads KKNQKRRDLKLRAQQ. The residue at position 779 (Ser-779) is a Phosphoserine.

The protein belongs to the PIH1 family. Kintoun subfamily. As to quaternary structure, interacts with Pp1alpha-96A, Pp1-87B, Pp1-13C and flw.

It localises to the cytoplasm. Required for cytoplasmic pre-assembly of axonemal dyneins, thereby playing a central role in motility in cilia and flagella. Involved in pre-assembly of dynein arm complexes in the cytoplasm before intraflagellar transport loads them for the ciliary compartment. The sequence is that of Protein kintoun from Drosophila ananassae (Fruit fly).